Reading from the N-terminus, the 393-residue chain is Aspartate aminotransferase (393 aa).

The L-aspartate site is built by Gly-38, Trp-124, and Asn-174. The residue at position 237 (Lys-237) is an N6-(pyridoxal phosphate)lysine.

Belongs to the class-I pyridoxal-phosphate-dependent aminotransferase family. As to quaternary structure, homodimer. Requires pyridoxal 5'-phosphate as cofactor.

The protein resides in the cytoplasm. The catalysed reaction is L-aspartate + 2-oxoglutarate = oxaloacetate + L-glutamate. This Bacillus subtilis (strain 168) protein is Aspartate aminotransferase (aspB).